Reading from the N-terminus, the 335-residue chain is Glyceraldehyde-3-phosphate dehydrogenase (335 aa).

NAD(+) is bound by residues 11-12, Asp33, and Lys78; that span reads RI. Residues 148–150, Thr179, 208–209, and Arg231 each bind D-glyceraldehyde 3-phosphate; these read SST and TG. Asn313 serves as a coordination point for NAD(+).

This sequence belongs to the glyceraldehyde-3-phosphate dehydrogenase family. In terms of assembly, homotetramer.

The protein localises to the cytoplasm. The catalysed reaction is D-glyceraldehyde 3-phosphate + phosphate + NAD(+) = (2R)-3-phospho-glyceroyl phosphate + NADH + H(+). Its pathway is carbohydrate degradation; glycolysis; pyruvate from D-glyceraldehyde 3-phosphate: step 1/5. This chain is Glyceraldehyde-3-phosphate dehydrogenase (GPD), found in Pleurotus sajor-caju (Oyster mushroom).